The following is a 588-amino-acid chain: MLGDVASLAEELRVAAGQEPADLYIKNIQIVDVYTETIFSGSLVIKNGKIVAVNPGWEVEAKEVFDGKGRFAVPGFMDAHIHIEPTLLSPEALASVIVPWGTTTLFADPMEIANVAGLKGVEALLNNTENLPYQIYIEVPSRVPTAPGLETTGGVLGVKEVDQLLQSNISASLGELDPSKILSIKEEYLAKIVSARANGKVANGHAIGLNWDQLNVYATAGLSDDHESVVFQELFERLRLGIKALVREGSTERNVEALVKGAIEQNLSTENLIFCTDDKHVNDIVREGHISFNVQKAIALGLNPIKAIQMATINTAKHFRLDHYLGALTPGKVADIVLLDDLVEIKPAYVFKNGKLVAQGGKLTQQIEISQYPAFLNETVKLPPNLAPTSFALPSQGNRCKVNVINLYPDQIINFASQEWLNVAGGEVQVNTNEDILKLAVVERYGKNGSVGVGFVRGFKLKAGALASSVSHDHHNIVIVGTNDQDMDLAAREIARHQGGLVAVENGQVIGVLPLPIGGLMSSLPAEQVMSQIDQLNKKAEQLGCDLPAPFMTLSFISLPTVPELGLTDCGLIHVLEHRIIPTVVETE.

Belongs to the metallo-dependent hydrolases superfamily. Adenine deaminase family. It depends on Mn(2+) as a cofactor.

The catalysed reaction is adenine + H2O + H(+) = hypoxanthine + NH4(+). The polypeptide is Adenine deaminase (Desulforamulus reducens (strain ATCC BAA-1160 / DSM 100696 / MI-1) (Desulfotomaculum reducens)).